We begin with the raw amino-acid sequence, 317 residues long: Melanocyte-stimulating hormone receptor (317 aa).

Residues 1–37 (MPVQGSQRRLLGSLNSTPTATPHLGLAANQTGARCLE) lie on the Extracellular side of the membrane. N29 carries an N-linked (GlcNAc...) asparagine glycan. A helical transmembrane segment spans residues 38–63 (VSVPDGLFLSLGLVSLVENVLVVTAI). The Cytoplasmic portion of the chain corresponds to 64–72 (AKNRNLHSP). A helical membrane pass occupies residues 73-93 (MYCFICCLALSDLLVSGSNML). At 94–118 (ETAVTLLLEAGALAARAAVVQQLDN) the chain is on the extracellular side. A helical membrane pass occupies residues 119–140 (VIDVITCSSMLSSLCFLGAIAV). At 141-163 (DRYISIFYALRYHSIVTLPRARR) the chain is on the cytoplasmic side. Residues 164–183 (AVAAIWVASVLFSTLFIAYY) form a helical membrane-spanning segment. At 184–191 (DHAAVLLC) the chain is on the extracellular side. A helical membrane pass occupies residues 192–211 (LVIFFLAMLVLMAVLYVHML). Residues 212–240 (ARACQHAQGIARLHKRQRLAHQGFGLKGA) lie on the Cytoplasmic side of the membrane. The chain crosses the membrane as a helical span at residues 241–266 (ATLTILLGIFFLCWGPFFLHLTLIVL). Over 267–279 (CPQHPTCSCIFKN) the chain is Extracellular. Residues 280–300 (FNLFLALIICNAIIDPLIYAF) form a helical membrane-spanning segment. Residues 301–317 (RSQELRRTLKEVLLCSW) lie on the Cytoplasmic side of the membrane. A lipid anchor (S-palmitoyl cysteine) is attached at C315.

It belongs to the G-protein coupled receptor 1 family. In terms of assembly, interacts with MGRN1, but does not undergo MGRN1-mediated ubiquitination; this interaction competes with GNAS-binding and thus inhibits agonist-induced cAMP production. Interacts with OPN3; the interaction results in a decrease in MC1R-mediated cAMP signaling and ultimately a decrease in melanin production in melanocytes.

The protein localises to the cell membrane. Its function is as follows. Receptor for MSH (alpha, beta and gamma) and ACTH. The activity of this receptor is mediated by G proteins which activate adenylate cyclase. Mediates melanogenesis, the production of eumelanin (black/brown) and phaeomelanin (red/yellow), via regulation of cAMP signaling in melanocytes. This chain is Melanocyte-stimulating hormone receptor (MC1R), found in Papio hamadryas (Hamadryas baboon).